Reading from the N-terminus, the 555-residue chain is Formate--tetrahydrofolate ligase (555 aa).

64–71 (TKAGIGKT) serves as a coordination point for ATP.

Belongs to the formate--tetrahydrofolate ligase family.

It carries out the reaction (6S)-5,6,7,8-tetrahydrofolate + formate + ATP = (6R)-10-formyltetrahydrofolate + ADP + phosphate. The protein operates within one-carbon metabolism; tetrahydrofolate interconversion. The chain is Formate--tetrahydrofolate ligase from Bacteroides thetaiotaomicron (strain ATCC 29148 / DSM 2079 / JCM 5827 / CCUG 10774 / NCTC 10582 / VPI-5482 / E50).